The following is a 248-amino-acid chain: Triosephosphate isomerase (248 aa).

9-11 (NWK) provides a ligand contact to substrate. Residue H94 is the Electrophile of the active site. E166 acts as the Proton acceptor in catalysis. Substrate is bound by residues G172, S212, and 233 to 234 (GG).

The protein belongs to the triosephosphate isomerase family. In terms of assembly, homodimer.

The protein resides in the cytoplasm. It carries out the reaction D-glyceraldehyde 3-phosphate = dihydroxyacetone phosphate. It functions in the pathway carbohydrate biosynthesis; gluconeogenesis. The protein operates within carbohydrate degradation; glycolysis; D-glyceraldehyde 3-phosphate from glycerone phosphate: step 1/1. Functionally, involved in the gluconeogenesis. Catalyzes stereospecifically the conversion of dihydroxyacetone phosphate (DHAP) to D-glyceraldehyde-3-phosphate (G3P). The sequence is that of Triosephosphate isomerase from Thermoanaerobacter pseudethanolicus (strain ATCC 33223 / 39E) (Clostridium thermohydrosulfuricum).